The following is a 431-amino-acid chain: Mannan endo-1,4-beta-mannosidase 5 (431 aa).

A signal peptide spans 1–24; that stretch reads MVPTRNRPMLRILGFFICAAFIYL. Asn-45 carries an N-linked (GlcNAc...) asparagine glycan. Trp-97 lines the substrate pocket. Asn-168 is a glycosylation site (N-linked (GlcNAc...) asparagine). Asn-213 provides a ligand contact to substrate. The active-site Proton donor is the Glu-214. Residue Asn-282 is glycosylated (N-linked (GlcNAc...) asparagine). Tyr-294 serves as a coordination point for substrate. Residue Asn-301 is glycosylated (N-linked (GlcNAc...) asparagine). The active-site Nucleophile is Glu-334. Trp-376 contributes to the substrate binding site.

It belongs to the glycosyl hydrolase 5 (cellulase A) family. Expressed in stems.

It localises to the secreted. The catalysed reaction is Random hydrolysis of (1-&gt;4)-beta-D-mannosidic linkages in mannans, galactomannans and glucomannans.. This is Mannan endo-1,4-beta-mannosidase 5 (MAN5) from Arabidopsis thaliana (Mouse-ear cress).